Consider the following 194-residue polypeptide: dTTP/UTP pyrophosphatase (194 aa).

Asp73 serves as the catalytic Proton acceptor.

It belongs to the Maf family. YhdE subfamily. It depends on a divalent metal cation as a cofactor.

The protein localises to the cytoplasm. The enzyme catalyses dTTP + H2O = dTMP + diphosphate + H(+). It carries out the reaction UTP + H2O = UMP + diphosphate + H(+). Functionally, nucleoside triphosphate pyrophosphatase that hydrolyzes dTTP and UTP. May have a dual role in cell division arrest and in preventing the incorporation of modified nucleotides into cellular nucleic acids. This is dTTP/UTP pyrophosphatase from Geotalea uraniireducens (strain Rf4) (Geobacter uraniireducens).